The following is a 504-amino-acid chain: D-alanine--D-alanyl carrier protein ligase (504 aa).

152–153 (TS) contributes to the ATP binding site. Position 197 (Asp197) interacts with D-alanine. 292 to 297 (NTYGPT) is a binding site for ATP. Position 301 (Val301) interacts with D-alanine. Residues Asp383, 394-397 (YNGR), and Lys492 each bind ATP. Lys492 contacts D-alanine.

Belongs to the ATP-dependent AMP-binding enzyme family. DltA subfamily.

Its subcellular location is the cytoplasm. It carries out the reaction holo-[D-alanyl-carrier protein] + D-alanine + ATP = D-alanyl-[D-alanyl-carrier protein] + AMP + diphosphate. The protein operates within cell wall biogenesis; lipoteichoic acid biosynthesis. Functionally, catalyzes the first step in the D-alanylation of lipoteichoic acid (LTA), the activation of D-alanine and its transfer onto the D-alanyl carrier protein (Dcp) DltC. In an ATP-dependent two-step reaction, forms a high energy D-alanyl-AMP intermediate, followed by transfer of the D-alanyl residue as a thiol ester to the phosphopantheinyl prosthetic group of the Dcp. D-alanylation of LTA plays an important role in modulating the properties of the cell wall in Gram-positive bacteria, influencing the net charge of the cell wall. In Bacillus cereus (strain Q1), this protein is D-alanine--D-alanyl carrier protein ligase.